Here is a 121-residue protein sequence, read N- to C-terminus: MTQQPYYETMYILRPDIPEEEVESHVTKYRDILTEAGAEVLDNQMRGKRRLAYPIAKHKEGIYVQLSHNGDGQQVGVIEKAMRLSEDVIRYLTVKQEGPLPAPRVAPGTEAPAEPEAAAPA.

Residues 99 to 121 are disordered; that stretch reads PLPAPRVAPGTEAPAEPEAAAPA. Residues 110-121 are compositionally biased toward low complexity; it reads EAPAEPEAAAPA.

The protein belongs to the bacterial ribosomal protein bS6 family.

Functionally, binds together with bS18 to 16S ribosomal RNA. The sequence is that of Small ribosomal subunit protein bS6 from Synechococcus sp. (strain CC9311).